Here is a 229-residue protein sequence, read N- to C-terminus: Potassium/proton antiporter CemA (229 aa).

3 consecutive transmembrane segments (helical) span residues 7–27 (FTPL…SLSF), 114–134 (IISF…LVIL), and 190–210 (ISGL…YWIF).

This sequence belongs to the CemA family.

It is found in the plastid. It localises to the chloroplast inner membrane. The enzyme catalyses K(+)(in) + H(+)(out) = K(+)(out) + H(+)(in). Functionally, contributes to K(+)/H(+) antiport activity by supporting proton efflux to control proton extrusion and homeostasis in chloroplasts in a light-dependent manner to modulate photosynthesis. Prevents excessive induction of non-photochemical quenching (NPQ) under continuous-light conditions. Indirectly promotes efficient inorganic carbon uptake into chloroplasts. This chain is Potassium/proton antiporter CemA, found in Jasminum nudiflorum (Winter jasmine).